The following is a 563-amino-acid chain: Membrane protein insertase YidC (563 aa).

A helical transmembrane segment spans residues 6–26; the sequence is TVLWMIFSFSLLLLWNNWQIH. Residues 36 to 70 form a disordered region; that stretch reads PAPEAAATQQPKADANGTAASSTASIPSSPAAAPA. Positions 54–70 are enriched in low complexity; it reads AASSTASIPSSPAAAPA. Transmembrane regions (helical) follow at residues 373–393, 443–463, 482–502, and 512–532; these read WGWTIVALTVIIKAVFFPLAA, LPMVVQIPVFIALYWVLLASV, PFFILPAIMMATMFLQIKLNP, and VMMIMPLVFGGMMFFFPAGLV.

It belongs to the OXA1/ALB3/YidC family. Type 1 subfamily. Interacts with the Sec translocase complex via SecD. Specifically interacts with transmembrane segments of nascent integral membrane proteins during membrane integration.

It is found in the cell membrane. In terms of biological role, required for the insertion and/or proper folding and/or complex formation of integral membrane proteins into the membrane. Involved in integration of membrane proteins that insert both dependently and independently of the Sec translocase complex, as well as at least some lipoproteins. Aids folding of multispanning membrane proteins. This Bordetella bronchiseptica (strain ATCC BAA-588 / NCTC 13252 / RB50) (Alcaligenes bronchisepticus) protein is Membrane protein insertase YidC.